Consider the following 140-residue polypeptide: ATP synthase epsilon chain (140 aa).

This sequence belongs to the ATPase epsilon chain family. In terms of assembly, F-type ATPases have 2 components, CF(1) - the catalytic core - and CF(0) - the membrane proton channel. CF(1) has five subunits: alpha(3), beta(3), gamma(1), delta(1), epsilon(1). CF(0) has three main subunits: a, b and c.

The protein resides in the cell inner membrane. Produces ATP from ADP in the presence of a proton gradient across the membrane. This Xanthomonas campestris pv. campestris (strain 8004) protein is ATP synthase epsilon chain.